We begin with the raw amino-acid sequence, 435 residues long: Flavonol 7-O-rhamnosyltransferase (435 aa).

Gln-18 serves as a coordination point for UDP. Gln-18 contributes to the UDP-beta-L-rhamnose binding site. His-21 acts as the Proton acceptor in catalysis. His-21 provides a ligand contact to quercetin. Asp-119 acts as the Charge relay in catalysis. UDP is bound by residues Ser-250, Ala-315, His-332, Gly-336, Ser-337, and Glu-340. UDP-beta-L-rhamnose-binding residues include Ser-250, Ala-315, His-332, Gly-336, Ser-337, and Glu-340.

This sequence belongs to the UDP-glycosyltransferase family. In terms of tissue distribution, highly expressed in floral buds. Expressed in stems, leaves and flowers. Expressed at low levels in roots and siliques. Expressed on the adaxial side of cotyledons and emerging leaves, in trichomes, root columella cells, and the late elongation/early differentiation zone of roots.

The enzyme catalyses quercitrin + UDP-beta-L-rhamnose = quercetin 3,7-bis-O-alpha-L-rhamnoside + UDP + H(+). It carries out the reaction quercetin 3-O-beta-D-glucoside + UDP-beta-L-rhamnose = quercetin 3-O-beta-D-glucoside-7-O-alpha-L-rhamnoside + UDP + H(+). The protein operates within flavonoid metabolism. Its function is as follows. Flavonol 7-O-rhamnosyltransferase that catalyzes the transfer of rhamnose from UDP-rhamnose to the 7-OH position of 3-O-glycosylated flavonols, such as kaempferol 3-O-rhamnoside, kaempferol 3-O-glucoside, quercetin 3-O-glucoside, quercetin 3-O-galactoside, quercetin 3-O-rhamnoside and isorhamnetin 3-O-glucoside. Is able to glycosylate the flavonols quercetin and kaempferol to yield quercetin 7-O-rhamnoside and kaempferol 7-O-rhamnoside. Shows a strict specificity for UDP-rhamnose as sugar donor. Does not act on 3-O-glycosylated anthocyanins. The accumulation of kaempferol 3-O-rhamnoside-7-O-rhamnoside inhibits basipetal auxin transport, which influences auxin distribution and plant organ development. In Arabidopsis thaliana (Mouse-ear cress), this protein is Flavonol 7-O-rhamnosyltransferase.